A 237-amino-acid polypeptide reads, in one-letter code: MGCCGCSGGCGSGCGGRGSGCGGCGSGCGGCGSGCGGCGSGCGGCGGCGSGCAGCGGCGSGCCVPVCCCKPMCCCVPACSCSSCGKGGCGSCGGSKRGCVSCGVSKGACGSCGGSKGGCGSCGGSKGGCGSCGGSKGGCGSCGGSKGGCGSYGCSQSSCCKPCCCSSGCGSSCCQSSCCKPYCCQSSCCKPYCCQSSCCKPCSCFSGCGSSCCQSSCYKPCCCQSSCCVPVCCQCKI.

8 consecutive repeat copies span residues 62 to 65, 68 to 71, 74 to 77, 159 to 162, 178 to 181, 188 to 191, 198 to 201, and 227 to 230. The interval 62–230 is 8 X 4 AA repeats of C-C-X-P; that stretch reads CCVPVCCCKP…CCCQSSCCVP (169 aa).

Belongs to the KRTAP type 5 family. In terms of assembly, interacts with hair keratins. As to expression, restricted to hair root, not detected in any other tissues.

Functionally, in the hair cortex, hair keratin intermediate filaments are embedded in an interfilamentous matrix, consisting of hair keratin-associated protein (KRTAP), which are essential for the formation of a rigid and resistant hair shaft through their extensive disulfide bond cross-linking with abundant cysteine residues of hair keratins. The matrix proteins include the high-sulfur and high-glycine-tyrosine keratins. This is Keratin-associated protein 5-5 (KRTAP5-5) from Homo sapiens (Human).